Reading from the N-terminus, the 1178-residue chain is DNA-directed RNA polymerase subunit beta' (1178 aa).

C60, C62, C75, and C78 together coordinate Zn(2+). Positions 450, 452, and 454 each coordinate Mg(2+). Positions 795, 869, 876, and 879 each coordinate Zn(2+).

This sequence belongs to the RNA polymerase beta' chain family. In terms of assembly, the RNAP catalytic core consists of 2 alpha, 1 beta, 1 beta' and 1 omega subunit. When a sigma factor is associated with the core the holoenzyme is formed, which can initiate transcription. Requires Mg(2+) as cofactor. Zn(2+) is required as a cofactor.

The enzyme catalyses RNA(n) + a ribonucleoside 5'-triphosphate = RNA(n+1) + diphosphate. Its function is as follows. DNA-dependent RNA polymerase catalyzes the transcription of DNA into RNA using the four ribonucleoside triphosphates as substrates. This chain is DNA-directed RNA polymerase subunit beta', found in Clostridium botulinum (strain Loch Maree / Type A3).